A 172-amino-acid chain; its full sequence is NADH-quinone oxidoreductase subunit B (172 aa).

[4Fe-4S] cluster-binding residues include Cys46, Cys47, Cys111, and Cys141.

The protein belongs to the complex I 20 kDa subunit family. As to quaternary structure, NDH-1 is composed of 14 different subunits. Subunits NuoB, C, D, E, F, and G constitute the peripheral sector of the complex. [4Fe-4S] cluster serves as cofactor.

The protein localises to the cell membrane. It carries out the reaction a quinone + NADH + 5 H(+)(in) = a quinol + NAD(+) + 4 H(+)(out). In terms of biological role, NDH-1 shuttles electrons from NADH, via FMN and iron-sulfur (Fe-S) centers, to quinones in the respiratory chain. The immediate electron acceptor for the enzyme in this species is believed to be a menaquinone. Couples the redox reaction to proton translocation (for every two electrons transferred, four hydrogen ions are translocated across the cytoplasmic membrane), and thus conserves the redox energy in a proton gradient. This is NADH-quinone oxidoreductase subunit B from Bacillus mycoides (strain KBAB4) (Bacillus weihenstephanensis).